A 417-amino-acid chain; its full sequence is Tyrosine--tRNA ligase (417 aa).

Residue tyrosine 35 coordinates L-tyrosine. Positions 40 to 49 match the 'HIGH' region motif; sequence ATAGSLTVGH. Positions 165 and 169 each coordinate L-tyrosine. The 'KMSKS' region signature appears at 229-233; sequence KFGKS. Residue lysine 232 participates in ATP binding. In terms of domain architecture, S4 RNA-binding spans 350 to 416; that stretch reads ISLLEALVFT…GKRFNALIIF (67 aa).

The protein belongs to the class-I aminoacyl-tRNA synthetase family. TyrS type 1 subfamily. Homodimer.

The protein resides in the cytoplasm. It carries out the reaction tRNA(Tyr) + L-tyrosine + ATP = L-tyrosyl-tRNA(Tyr) + AMP + diphosphate + H(+). In terms of biological role, catalyzes the attachment of tyrosine to tRNA(Tyr) in a two-step reaction: tyrosine is first activated by ATP to form Tyr-AMP and then transferred to the acceptor end of tRNA(Tyr). This Phytoplasma mali (strain AT) protein is Tyrosine--tRNA ligase.